A 344-amino-acid chain; its full sequence is Cysteine proteinase 5 (344 aa).

Positions 1–17 (MKVLSFLCVLLVSVATA) are cleaved as a signal peptide. The propeptide at 18-111 (KQQFSELQYR…TQEEKVFTTS (94 aa)) is activation peptide. Cystine bridges form between cysteine 133/cysteine 174, cysteine 167/cysteine 207, and cysteine 265/cysteine 333. Cysteine 136 is a catalytic residue. Residue histidine 272 is part of the active site. Asparagine 297 is a glycosylation site (N-linked (GlcNAc...) asparagine). Residue asparagine 311 is part of the active site.

Belongs to the peptidase C1 family. Glycosylated; contains GlcNAc-alpha-1-P-Ser residues.

The protein localises to the lysosome. The protein is Cysteine proteinase 5 (cprE) of Dictyostelium discoideum (Social amoeba).